The primary structure comprises 600 residues: Elongation factor 4 (600 aa).

The region spanning 4-186 (SKIRNFSIIA…EIVKKIPAPQ (183 aa)) is the tr-type G domain. GTP is bound by residues 16 to 21 (DHGKST) and 133 to 136 (NKID).

The protein belongs to the TRAFAC class translation factor GTPase superfamily. Classic translation factor GTPase family. LepA subfamily.

It localises to the cell inner membrane. The enzyme catalyses GTP + H2O = GDP + phosphate + H(+). Required for accurate and efficient protein synthesis under certain stress conditions. May act as a fidelity factor of the translation reaction, by catalyzing a one-codon backward translocation of tRNAs on improperly translocated ribosomes. Back-translocation proceeds from a post-translocation (POST) complex to a pre-translocation (PRE) complex, thus giving elongation factor G a second chance to translocate the tRNAs correctly. Binds to ribosomes in a GTP-dependent manner. This chain is Elongation factor 4, found in Trichlorobacter lovleyi (strain ATCC BAA-1151 / DSM 17278 / SZ) (Geobacter lovleyi).